The chain runs to 420 residues: Napsin-A (420 aa).

The first 25 residues, 1-25 (MSPPPLLQPLLLLLPLLNVEPSGAT), serve as a signal peptide directing secretion. A propeptide spans 26–63 (LIRIPLHRVQPGRRILNLLRGWREPAELPKLGAPSPGD) (activation peptide). Residues 78-399 (YFGEIGLGTP…MKSSARVGLA (322 aa)) form the Peptidase A1 domain. Asn90 carries an N-linked (GlcNAc...) asparagine glycan. Residue Asp96 is part of the active site. Cysteines 109 and 116 form a disulfide. An N-linked (GlcNAc...) asparagine glycan is attached at Asn133. A disulfide bridge connects residues Cys274 and Cys278. Asp283 is an active-site residue. A disulfide bond links Cys317 and Cys354. Asn336 carries an N-linked (GlcNAc...) asparagine glycan.

The protein belongs to the peptidase A1 family. Expressed predominantly in adult lung (type II pneumocytes) and kidney and in fetal lung. Low levels in adult spleen and very low levels in peripheral blood leukocytes.

Its subcellular location is the secreted. In terms of biological role, may be involved in processing of pneumocyte surfactant precursors. This is Napsin-A (NAPSA) from Homo sapiens (Human).